A 662-amino-acid polypeptide reads, in one-letter code: UvrABC system protein B (662 aa).

The region spanning 25–182 (KGIEKGEKFQ…KKLVEIQYER (158 aa)) is the Helicase ATP-binding domain. An ATP-binding site is contributed by 38 to 45 (GVTGSGKT). The Beta-hairpin motif lies at 91-114 (YYDYYQPEAYVAQSDTYIEKDASI). One can recognise a Helicase C-terminal domain in the interval 429 to 595 (QIDDLYTSIQ…TIIKDIREVI (167 aa)). A UVR domain is found at 622–657 (DKLIEKYEEEMREAAQNLQFEKAAHLRDVIYKLKRD).

Belongs to the UvrB family. In terms of assembly, forms a heterotetramer with UvrA during the search for lesions. Interacts with UvrC in an incision complex.

It localises to the cytoplasm. Functionally, the UvrABC repair system catalyzes the recognition and processing of DNA lesions. A damage recognition complex composed of 2 UvrA and 2 UvrB subunits scans DNA for abnormalities. Upon binding of the UvrA(2)B(2) complex to a putative damaged site, the DNA wraps around one UvrB monomer. DNA wrap is dependent on ATP binding by UvrB and probably causes local melting of the DNA helix, facilitating insertion of UvrB beta-hairpin between the DNA strands. Then UvrB probes one DNA strand for the presence of a lesion. If a lesion is found the UvrA subunits dissociate and the UvrB-DNA preincision complex is formed. This complex is subsequently bound by UvrC and the second UvrB is released. If no lesion is found, the DNA wraps around the other UvrB subunit that will check the other stand for damage. This chain is UvrABC system protein B, found in Clostridium botulinum (strain 657 / Type Ba4).